Here is a 267-residue protein sequence, read N- to C-terminus: Phosphate import ATP-binding protein PstB 2 (267 aa).

The ABC transporter domain occupies 21-262; that stretch reads LATKDLHVYY…AQCQSTNDYV (242 aa). 53 to 60 serves as a coordination point for ATP; it reads GPSGCGKS.

The protein belongs to the ABC transporter superfamily. Phosphate importer (TC 3.A.1.7) family. As to quaternary structure, the complex is composed of two ATP-binding proteins (PstB), two transmembrane proteins (PstC and PstA) and a solute-binding protein (PstS).

It localises to the cell membrane. The catalysed reaction is phosphate(out) + ATP + H2O = ADP + 2 phosphate(in) + H(+). Part of the ABC transporter complex PstSACB involved in phosphate import. Responsible for energy coupling to the transport system. This Streptococcus pyogenes serotype M1 protein is Phosphate import ATP-binding protein PstB 2.